The primary structure comprises 499 residues: MVLLYSQASWDKRSKADALVLPFWMKNSKAQEAAVVDEDYKLVYQNALSNFSGKKGETAFLFGNDHTKEQKIVLLGLGKSEEVSGTTVLEAYAQATTVLRKAKCKTVNILLPTISQLRFSVEEFLTNLAAGVLSLNYNYPTYHKVDTSLPFLEKVTVVGIVSKVGDKIFRKEESLFEGVYLTRDLVNTNADEVTPEKLAAVAKGLAGEFASLDVKILDRKAILKEKMGLLAAVAKGAAVEPRFIVLDYQGNPKSKDRTVLIGKGVTFDSGGLDLKPGKAMITMKEDMAGAATVLGIFSALASLELPINVTGIIPATENAIGSAAYKMGDVYVGMTGLSVEIGSTDAEGRLILADAISYALKYCNPTRIIDFATLTGAMVVSLGESVAGFFANNDVLARDLAEASSETGEALWRMPLVEKYDPALHSDIADMKNIGSNRAGSITAALFLQRFLEDNPVAWAHLDIAGTAYHEKEELPYPKYATGFGVRCLIHYMEKFLSK.

Positions 263 and 268 each coordinate Mn(2+). The active site involves lysine 275. Positions 286, 345, and 347 each coordinate Mn(2+). Residue arginine 349 is part of the active site.

Belongs to the peptidase M17 family. The cofactor is Mn(2+).

The protein localises to the cytoplasm. It catalyses the reaction Release of an N-terminal amino acid, Xaa-|-Yaa-, in which Xaa is preferably Leu, but may be other amino acids including Pro although not Arg or Lys, and Yaa may be Pro. Amino acid amides and methyl esters are also readily hydrolyzed, but rates on arylamides are exceedingly low.. The enzyme catalyses Release of an N-terminal amino acid, preferentially leucine, but not glutamic or aspartic acids.. In terms of biological role, presumably involved in the processing and regular turnover of intracellular proteins. Catalyzes the removal of unsubstituted N-terminal amino acids from various peptides. This Chlamydia trachomatis serovar A (strain ATCC VR-571B / DSM 19440 / HAR-13) protein is Probable cytosol aminopeptidase.